Reading from the N-terminus, the 160-residue chain is Cytochrome b6-f complex subunit 4 (160 aa).

Helical transmembrane passes span 36–56 (LLYIFPVVILGTIACVVGLAV), 95–115 (LLGIALQTLIPLGLMILPFIE), and 131–151 (VVFLFGTFLTIYLGIGACLPI).

Belongs to the cytochrome b family. PetD subfamily. As to quaternary structure, the 4 large subunits of the cytochrome b6-f complex are cytochrome b6, subunit IV (17 kDa polypeptide, PetD), cytochrome f and the Rieske protein, while the 4 small subunits are PetG, PetL, PetM and PetN. The complex functions as a dimer.

Its subcellular location is the cellular thylakoid membrane. Component of the cytochrome b6-f complex, which mediates electron transfer between photosystem II (PSII) and photosystem I (PSI), cyclic electron flow around PSI, and state transitions. The sequence is that of Cytochrome b6-f complex subunit 4 from Prochlorococcus marinus (strain MIT 9515).